A 238-amino-acid polypeptide reads, in one-letter code: Probable transcriptional regulatory protein YcdB (238 aa).

Belongs to the TACO1 family. YeeN subfamily.

It localises to the cytoplasm. The polypeptide is Probable transcriptional regulatory protein YcdB (ycdB) (Lactococcus lactis subsp. lactis (strain IL1403) (Streptococcus lactis)).